Here is a 385-residue protein sequence, read N- to C-terminus: Acetate kinase (385 aa).

N9 contributes to the Mg(2+) binding site. K16 is an ATP binding site. Substrate is bound at residue R75. D132 serves as the catalytic Proton donor/acceptor. Residues 192-196 (HLGNG), 266-268 (DFR), and 314-318 (GIGEN) contribute to the ATP site. Mg(2+) is bound at residue E368.

This sequence belongs to the acetokinase family. As to quaternary structure, homodimer. It depends on Mg(2+) as a cofactor. Mn(2+) serves as cofactor.

It localises to the cytoplasm. It carries out the reaction acetate + ATP = acetyl phosphate + ADP. It participates in metabolic intermediate biosynthesis; acetyl-CoA biosynthesis; acetyl-CoA from acetate: step 1/2. In terms of biological role, catalyzes the formation of acetyl phosphate from acetate and ATP. Can also catalyze the reverse reaction. The chain is Acetate kinase from Mycobacterium bovis (strain ATCC BAA-935 / AF2122/97).